The following is a 175-amino-acid chain: Threonylcarbamoyl-AMP synthase (175 aa).

In terms of domain architecture, YrdC-like spans 1 to 175; sequence MLHNDDVIAY…IINGKLIRYV (175 aa).

It belongs to the SUA5 family. TsaC subfamily.

It is found in the cytoplasm. The enzyme catalyses L-threonine + hydrogencarbonate + ATP = L-threonylcarbamoyladenylate + diphosphate + H2O. Required for the formation of a threonylcarbamoyl group on adenosine at position 37 (t(6)A37) in tRNAs that read codons beginning with adenine. Catalyzes the conversion of L-threonine, HCO(3)(-)/CO(2) and ATP to give threonylcarbamoyl-AMP (TC-AMP) as the acyladenylate intermediate, with the release of diphosphate. The protein is Threonylcarbamoyl-AMP synthase of Buchnera aphidicola subsp. Acyrthosiphon pisum (strain APS) (Acyrthosiphon pisum symbiotic bacterium).